We begin with the raw amino-acid sequence, 215 residues long: Large ribosomal subunit protein bL25 (215 aa).

A compositionally biased stretch (polar residues) spans 1–10 (MAKSASNQLR). Disordered stretches follow at residues 1 to 25 (MAKS…SRRA) and 187 to 215 (ELEG…GESE).

The protein belongs to the bacterial ribosomal protein bL25 family. CTC subfamily. Part of the 50S ribosomal subunit; part of the 5S rRNA/L5/L18/L25 subcomplex. Contacts the 5S rRNA. Binds to the 5S rRNA independently of L5 and L18.

Functionally, this is one of the proteins that binds to the 5S RNA in the ribosome where it forms part of the central protuberance. The chain is Large ribosomal subunit protein bL25 from Mycobacterium bovis (strain ATCC BAA-935 / AF2122/97).